The following is a 521-amino-acid chain: Protein nucleotidyltransferase YdiU (521 aa).

ATP is bound by residues G109, G111, R112, K131, D143, G144, R194, and R201. Catalysis depends on D270, which acts as the Proton acceptor. Residues N271 and D280 each coordinate Mg(2+). D280 is an ATP binding site.

The protein belongs to the SELO family. The cofactor is Mg(2+). It depends on Mn(2+) as a cofactor.

It carries out the reaction L-seryl-[protein] + ATP = 3-O-(5'-adenylyl)-L-seryl-[protein] + diphosphate. It catalyses the reaction L-threonyl-[protein] + ATP = 3-O-(5'-adenylyl)-L-threonyl-[protein] + diphosphate. The catalysed reaction is L-tyrosyl-[protein] + ATP = O-(5'-adenylyl)-L-tyrosyl-[protein] + diphosphate. The enzyme catalyses L-histidyl-[protein] + UTP = N(tele)-(5'-uridylyl)-L-histidyl-[protein] + diphosphate. It carries out the reaction L-seryl-[protein] + UTP = O-(5'-uridylyl)-L-seryl-[protein] + diphosphate. It catalyses the reaction L-tyrosyl-[protein] + UTP = O-(5'-uridylyl)-L-tyrosyl-[protein] + diphosphate. Nucleotidyltransferase involved in the post-translational modification of proteins. It can catalyze the addition of adenosine monophosphate (AMP) or uridine monophosphate (UMP) to a protein, resulting in modifications known as AMPylation and UMPylation. The protein is Protein nucleotidyltransferase YdiU of Burkholderia pseudomallei (strain K96243).